The following is a 279-amino-acid chain: MTLAYETVSENRSFGGIQGVYRHQSQATGTPMTFAIYLPPDARHGKVPVLWYLSGLTCTHENAMTKAGAQEWAAEYGIAVIFPDTSPRGEGVANDETYDLGQGAGFYVDATEAPWAPHFRMWHYVTHELPELVFNNFPLDREAQGITGHSMGGHGALTIAMTFPERYRSVSAFAPIAHPSESDWGRKQFAAYLGDDKAAWKRHDSTILMREKGYPGEVLIDQGASDQFLDLLKPEALAHAMAERRQPGTFRMQQGYDHSYFFVQSFMADHIRWHAERLG.

Residues Ser150, Asp226, and His258 each act as charge relay system in the active site.

Belongs to the esterase D family.

The enzyme catalyses S-formylglutathione + H2O = formate + glutathione + H(+). In terms of biological role, serine hydrolase involved in the detoxification of formaldehyde. Hydrolyzes S-formylglutathione to glutathione and formate. This is S-formylglutathione hydrolase (fghA) from Paracoccus denitrificans (strain Pd 1222).